The chain runs to 649 residues: 1,4-alpha-glucan branching enzyme GlgB (649 aa).

Residue aspartate 315 is the Nucleophile of the active site. The Proton donor role is filled by glutamate 366.

This sequence belongs to the glycosyl hydrolase 13 family. GlgB subfamily. As to quaternary structure, monomer.

The enzyme catalyses Transfers a segment of a (1-&gt;4)-alpha-D-glucan chain to a primary hydroxy group in a similar glucan chain.. It functions in the pathway glycan biosynthesis; glycogen biosynthesis. Catalyzes the formation of the alpha-1,6-glucosidic linkages in glycogen by scission of a 1,4-alpha-linked oligosaccharide from growing alpha-1,4-glucan chains and the subsequent attachment of the oligosaccharide to the alpha-1,6 position. This is 1,4-alpha-glucan branching enzyme GlgB from Ligilactobacillus salivarius (strain UCC118) (Lactobacillus salivarius).